A 539-amino-acid chain; its full sequence is Aluminum-activated malate transporter 13 (539 aa).

A run of 6 helical transmembrane segments spans residues Val-57–Val-77, Asn-80–Leu-100, Gly-107–Ser-127, Ile-130–Met-150, Leu-165–Ile-185, and Leu-192–Ile-212.

This sequence belongs to the aromatic acid exporter (TC 2.A.85) family.

The protein localises to the membrane. Functionally, malate transporter. This chain is Aluminum-activated malate transporter 13 (ALMT13), found in Arabidopsis thaliana (Mouse-ear cress).